Consider the following 210-residue polypeptide: Glutathione S-transferase P (210 aa).

The GST N-terminal domain maps to 2 to 81 (PPYTIVYFPV…HLGRSLGLYG (80 aa)). A Phosphotyrosine; by EGFR modification is found at Tyr-4. Glutathione contacts are provided by residues Tyr-8, Arg-14, Trp-39, Lys-45, 52-53 (QL), and 65-66 (QS). One can recognise a GST C-terminal domain in the interval 83–204 (DQKEAALVDM…SSPDHVNRPI (122 aa)). Lys-103 and Lys-116 each carry N6-succinyllysine. Residue Lys-128 is modified to N6-acetyllysine.

Belongs to the GST superfamily. Pi family. In terms of assembly, homodimer. Interacts with CDK5.

The protein resides in the cytoplasm. It localises to the mitochondrion. It is found in the nucleus. It carries out the reaction RX + glutathione = an S-substituted glutathione + a halide anion + H(+). The catalysed reaction is prostaglandin J2 + glutathione = prostaglandin J2-S-(R)-glutathione. It catalyses the reaction prostaglandin J2 + glutathione = prostaglandin J2-S-(S)-glutathione. The enzyme catalyses prostaglandin A2 + glutathione = prostaglandin A2-S-(S)-glutathione. It carries out the reaction 11(S)-hydroxy-14(S),15(S)-epoxy-(5Z,8Z,12E)-eicosatrienoate + glutathione = (11S,15S)-dihydroxy-14(R)-S-glutathionyl-(5Z,8Z,12E)-eicosatrienoate. Conjugation of reduced glutathione to a wide number of exogenous and endogenous hydrophobic electrophiles. Involved in the formation of glutathione conjugates of both prostaglandin A2 (PGA2) and prostaglandin J2 (PGJ2). Participates in the formation of novel hepoxilin regioisomers. Negatively regulates CDK5 activity via p25/p35 translocation to prevent neurodegeneration. The chain is Glutathione S-transferase P (GSTP1) from Mesocricetus auratus (Golden hamster).